The sequence spans 678 residues: RNA helicase NPH-II (678 aa).

One can recognise a Helicase ATP-binding domain in the interval 175 to 351 (FESWIHHVPV…EFFTESVFVH (177 aa)). Position 188 to 195 (188 to 195 (GDTGVGKT)) interacts with ATP. Residues 300 to 303 (DEVH) carry the DEXH box motif. The 176-residue stretch at 371–546 (SLNKFMYIEE…VFDLQLPEDL (176 aa)) folds into the Helicase C-terminal domain.

Belongs to the DEAD box helicase family. DEAH subfamily. Monomer.

The protein localises to the virion. The enzyme catalyses ATP + H2O = ADP + phosphate + H(+). Functionally, NTP-dependent helicase that catalyzes unidirectional unwinding of 3'tailed duplex RNAs and plays an important role during transcription of early mRNAs, presumably by preventing R-loop formation behind the elongating RNA polymerase. Might also play a role in the export of newly synthesized mRNA chains out of the core into the cytoplasm. Required for replication and propagation of viral particles. This Oryctolagus cuniculus (Rabbit) protein is RNA helicase NPH-II (OPG084).